The primary structure comprises 500 residues: MLSSSSLYAAIDLGSNSFHMLVVREVSGSMQILARIKRKVRLAAGLDKNNRLSQQAMERGWQCLRIFSERLQDIPPSQIRVVATATLRIAENSDEFVGKASEILDCPVKVISGEDEARLIYQGVAHTTGGPEKRLVVDIGGASTELVTGNGAKASQLSSLSMGCVTWLEGYFNDRSLTEENFARAEAAAHETLKLIAPKLIEQGWQICVGASGTVQALQEIMIAQGMDELITLPKLQELKHKAIECGKLEELEIEGLTLERALVFPSGLAILIAIFQALNIESMILAGGALREGLVYGMLDLPIEPDIRTRTLRNIQRRFQLDVEQSQRVKQLAEHFLQQVAKPWELDSRCHELLQSACLIHEIGLSIDFHQAPSHAAYLINYLALPGYTPAQKKLLATLLKNQSGPIDLFSFNQQNALPLIQAQRLCRLLRLAIIFANRRRNDTLPALRLKVSDEALTITLPHGWLMQHPLRAESLQQEIQWQNHAQWSLVLGEQDAQT.

The protein belongs to the GppA/Ppx family. GppA subfamily.

It catalyses the reaction guanosine 3'-diphosphate 5'-triphosphate + H2O = guanosine 3',5'-bis(diphosphate) + phosphate + H(+). The protein operates within purine metabolism; ppGpp biosynthesis; ppGpp from GTP: step 2/2. In terms of biological role, catalyzes the conversion of pppGpp to ppGpp. Guanosine pentaphosphate (pppGpp) is a cytoplasmic signaling molecule which together with ppGpp controls the 'stringent response', an adaptive process that allows bacteria to respond to amino acid starvation, resulting in the coordinated regulation of numerous cellular activities. The sequence is that of Guanosine-5'-triphosphate,3'-diphosphate pyrophosphatase from Photorhabdus laumondii subsp. laumondii (strain DSM 15139 / CIP 105565 / TT01) (Photorhabdus luminescens subsp. laumondii).